We begin with the raw amino-acid sequence, 596 residues long: Aspartate--tRNA(Asp/Asn) ligase (596 aa).

Glu172 is an L-aspartate binding site. Residues 196 to 199 (QLFK) are aspartate. An L-aspartate-binding site is contributed by Arg218. ATP-binding positions include 218–220 (RDE) and Gln227. Residue His450 participates in L-aspartate binding. Glu484 serves as a coordination point for ATP. Arg491 lines the L-aspartate pocket. ATP is bound at residue 536–539 (GLDR).

It belongs to the class-II aminoacyl-tRNA synthetase family. Type 1 subfamily. Homodimer.

The protein localises to the cytoplasm. It catalyses the reaction tRNA(Asx) + L-aspartate + ATP = L-aspartyl-tRNA(Asx) + AMP + diphosphate. Functionally, aspartyl-tRNA synthetase with relaxed tRNA specificity since it is able to aspartylate not only its cognate tRNA(Asp) but also tRNA(Asn). Reaction proceeds in two steps: L-aspartate is first activated by ATP to form Asp-AMP and then transferred to the acceptor end of tRNA(Asp/Asn). This Acidithiobacillus ferrooxidans (strain ATCC 23270 / DSM 14882 / CIP 104768 / NCIMB 8455) (Ferrobacillus ferrooxidans (strain ATCC 23270)) protein is Aspartate--tRNA(Asp/Asn) ligase.